Here is a 427-residue protein sequence, read N- to C-terminus: Inward rectifier potassium channel 2 (427 aa).

Over methionine 1–tryptophan 81 the chain is Cytoplasmic. Cysteine 76 is modified (S-nitrosocysteine). Residues arginine 82 to isoleucine 106 form a helical membrane-spanning segment. The Extracellular portion of the chain corresponds to alanine 107–serine 128. An intramembrane region (helical; Pore-forming) is located at residues phenylalanine 129–glutamine 140. Residues threonine 141 to phenylalanine 147 constitute an intramembrane region (pore-forming). The short motif at threonine 142–phenylalanine 147 is the Selectivity filter element. At arginine 148–isoleucine 156 the chain is on the extracellular side. Residues alanine 157–alanine 178 form a helical membrane-spanning segment. Topologically, residues valine 179–isoleucine 427 are cytoplasmic. The tract at residues alanine 181–leucine 208 is polyphosphoinositide (PIP2)-binding. Residues serine 384–isoleucine 427 form a disordered region. The short motif at serine 425–isoleucine 427 is the PDZ-binding element.

Belongs to the inward rectifier-type potassium channel (TC 1.A.2.1) family. KCNJ2 subfamily. Homotetramer. Homomultimeric and heteromultimeric association with KCNJ4/Kir2.3. Can form heteromeric channels with Kir2.6/KCNJ18. Associates, via its PDZ-recognition domain, with a complex containing LIN7A, LIN7B, LIN7C, DLG1, CASK and APBA1. Post-translationally, S-nitrosylation increases the open probability and inward rectifying currents.

It is found in the cell membrane. It localises to the sarcolemma. The protein resides in the T-tubule. The enzyme catalyses K(+)(in) = K(+)(out). Activated by phosphatidylinositol 4,5 biphosphate (PtdIns(4,5)P2). Inward rectifier potassium channels are characterized by a greater tendency to allow potassium to flow into the cell rather than out of it. Their voltage dependence is regulated by the concentration of extracellular potassium; as external potassium is raised, the voltage range of the channel opening shifts to more positive voltages. The inward rectification is mainly due to the blockage of outward current by internal magnesium. Can be blocked by extracellular barium and cesium. Probably participates in establishing action potential waveform and excitability of neuronal and muscle tissues. This Sus scrofa (Pig) protein is Inward rectifier potassium channel 2 (KCNJ2).